The following is a 304-amino-acid chain: Undecaprenyl-diphosphatase (304 aa).

7 consecutive transmembrane segments (helical) span residues 1-21, 54-74, 90-110, 114-134, 192-212, 225-245, and 253-273; these read MSLLAAVFLGVLQAATEFLPV, TTLAVLVYFRTEILSLLAAGL, LAWFIVLGTVPAAVLGKLFEE, ALGNWVIAGSLVVLGLVLLAA, FLLSVPIILGAGGYKLWKTVP, LVGTAVSAVAGYLVIDWLLGW, and LFVVWRIAAGVALAILIWQGV.

The protein belongs to the UppP family.

The protein localises to the cell inner membrane. It catalyses the reaction di-trans,octa-cis-undecaprenyl diphosphate + H2O = di-trans,octa-cis-undecaprenyl phosphate + phosphate + H(+). In terms of biological role, catalyzes the dephosphorylation of undecaprenyl diphosphate (UPP). Confers resistance to bacitracin. The sequence is that of Undecaprenyl-diphosphatase from Anaeromyxobacter sp. (strain Fw109-5).